The chain runs to 111 residues: Probable 4-amino-4-deoxy-L-arabinose-phosphoundecaprenol flippase subunit ArnE (111 aa).

3 consecutive transmembrane segments (helical) span residues 37-57 (LIWL…WLKL), 65-85 (QAYP…HFFF), and 91-111 (LQHW…GQGI).

This sequence belongs to the ArnE family. In terms of assembly, heterodimer of ArnE and ArnF.

It is found in the cell inner membrane. The protein operates within bacterial outer membrane biogenesis; lipopolysaccharide biosynthesis. In terms of biological role, translocates 4-amino-4-deoxy-L-arabinose-phosphoundecaprenol (alpha-L-Ara4N-phosphoundecaprenol) from the cytoplasmic to the periplasmic side of the inner membrane. The sequence is that of Probable 4-amino-4-deoxy-L-arabinose-phosphoundecaprenol flippase subunit ArnE from Hamiltonella defensa subsp. Acyrthosiphon pisum (strain 5AT).